Here is a 590-residue protein sequence, read N- to C-terminus: Aspartate--tRNA ligase (590 aa).

Position 174 (glutamate 174) interacts with L-aspartate. Residues 198 to 201 (QLMK) form an aspartate region. Residue arginine 220 participates in L-aspartate binding. Residues 220–222 (RDE) and glutamine 229 each bind ATP. L-aspartate is bound at residue histidine 443. Glutamate 484 lines the ATP pocket. An L-aspartate-binding site is contributed by arginine 491. 536-539 (GLDR) is a binding site for ATP.

Belongs to the class-II aminoacyl-tRNA synthetase family. Type 1 subfamily. Homodimer.

It localises to the cytoplasm. The catalysed reaction is tRNA(Asp) + L-aspartate + ATP = L-aspartyl-tRNA(Asp) + AMP + diphosphate. Its function is as follows. Catalyzes the attachment of L-aspartate to tRNA(Asp) in a two-step reaction: L-aspartate is first activated by ATP to form Asp-AMP and then transferred to the acceptor end of tRNA(Asp). This is Aspartate--tRNA ligase from Lactococcus lactis subsp. cremoris (strain MG1363).